A 911-amino-acid chain; its full sequence is Epithelial discoidin domain-containing receptor 1 (911 aa).

Positions 1-19 (MGTGTLSSLLLLLLLVTIG) are cleaved as a signal peptide. Topologically, residues 22-415 (DMKGHFDPAK…VAKAEGSPTA (394 aa)) are extracellular. Residues 32–186 (CRYALGMQDR…VCLRVELYGC (155 aa)) enclose the F5/8 type C domain. Disulfide bonds link C32/C186 and C75/C178. The interval 193-369 (LSYTAPVGQT…LFSEISFISD (177 aa)) is DS-like domain. Residues N213, Q232, D235, V237, Y255, and Y257 each coordinate Ca(2+). A glycan (N-linked (GlcNAc...) asparagine) is linked at N213. Residue N262 is glycosylated (N-linked (GlcNAc...) asparagine). C305 and C350 are joined by a disulfide. Ca(2+) contacts are provided by S362 and E363. N-linked (GlcNAc...) asparagine glycans are attached at residues N372 and N392. A helical membrane pass occupies residues 416–436 (ILIGCLVAIILLLLLIIALML). Topologically, residues 437 to 911 (WRLHWRRLLS…FLADDALNTV (475 aa)) are cytoplasmic. The tract at residues 468–496 (ILINNRPGPREPPPYQEPRPRGTPPHSAP) is disordered. Residues 477–494 (REPPPYQEPRPRGTPPHS) show a composition bias toward pro residues. The short motif at 479 to 482 (PPPY) is the PPxY motif element. Phosphotyrosine; by autocatalysis is present on residues Y482, Y511, and Y518. Residues 608-903 (LRFKEKLGEG…PPFAQLHRFL (296 aa)) form the Protein kinase domain. ATP contacts are provided by residues 614–622 (LGEGQFGEV) and K653. Y738 carries the phosphotyrosine; by autocatalysis modification. The Proton acceptor role is filled by D764. A phosphotyrosine; by autocatalysis mark is found at Y790, Y794, and Y795.

This sequence belongs to the protein kinase superfamily. Tyr protein kinase family. Insulin receptor subfamily. In terms of assembly, homodimer. Interacts (via PPxY motif) with WWC1 (via WW domains) in a collagen-regulated manner. Forms a tripartite complex with WWC1 and PRKCZ, but predominantly in the absence of collagen. Interacts (tyrosine phosphorylated) with SHC1. Interacts with SRC. Interacts with MYH9. Interacts with CDH1. Interacts with PTPN11. Interacts with NCK2. In terms of processing, autophosphorylated in response to fibrillar collagen binding. In terms of tissue distribution, detected in the cochlea and the organ of Corti in the inner ear. Isoform 1 is predominant and is expressed in developing embryo and adult brain. Isoform 2 is expressed in various epithelial cells.

The protein localises to the cell membrane. The enzyme catalyses L-tyrosyl-[protein] + ATP = O-phospho-L-tyrosyl-[protein] + ADP + H(+). Functionally, tyrosine kinase that functions as a cell surface receptor for fibrillar collagen and regulates cell attachment to the extracellular matrix, remodeling of the extracellular matrix, cell migration, differentiation, survival and cell proliferation. Collagen binding triggers a signaling pathway that involves SRC and leads to the activation of MAP kinases. Regulates remodeling of the extracellular matrix by up-regulation of the matrix metalloproteinases MMP2, MMP7 and MMP9, and thereby facilitates cell migration and wound healing, but also tumor cell invasion. Promotes smooth muscle cell migration, and thereby contributes to arterial wound healing. Phosphorylates PTPN11. Required for normal blastocyst implantation during pregnancy, for normal mammary gland differentiation and normal lactation. Required for normal ear morphology and normal hearing. The sequence is that of Epithelial discoidin domain-containing receptor 1 (Ddr1) from Mus musculus (Mouse).